The sequence spans 35 residues: Coenzyme PQQ synthesis protein A (35 aa).

A cross-link (pyrroloquinoline quinone (Glu-Tyr)) is located at residues 16–20 (EINMY).

The protein belongs to the PqqA family.

It functions in the pathway cofactor biosynthesis; pyrroloquinoline quinone biosynthesis. In terms of biological role, required for coenzyme pyrroloquinoline quinone (PQQ) biosynthesis. PQQ is probably formed by cross-linking a specific glutamate to a specific tyrosine residue and excising these residues from the peptide. In Ruegeria pomeroyi (strain ATCC 700808 / DSM 15171 / DSS-3) (Silicibacter pomeroyi), this protein is Coenzyme PQQ synthesis protein A.